The chain runs to 217 residues: Somatotropin (217 aa).

The N-terminal stretch at 1 to 26 (MAPGSRTSLLLAFGLLCLPWLQEGSA) is a signal peptide. A Zn(2+)-binding site is contributed by His44. A disulfide bond links Cys79 and Cys191. Ser132 carries the post-translational modification Phosphoserine. Residue Glu200 coordinates Zn(2+). The cysteines at positions 208 and 215 are disulfide-linked.

Belongs to the somatotropin/prolactin family.

It localises to the secreted. Its function is as follows. Plays an important role in growth control. Its major role in stimulating body growth is to stimulate the liver and other tissues to secrete IGF1. It stimulates both the differentiation and proliferation of myoblasts. It also stimulates amino acid uptake and protein synthesis in muscle and other tissues. This is Somatotropin (GH1) from Pan troglodytes (Chimpanzee).